A 442-amino-acid polypeptide reads, in one-letter code: C4-dicarboxylate transport protein (442 aa).

9 helical membrane-spanning segments follow: residues 13–33 (VLYF…HFYP), 49–69 (GIKM…IAGM), 81–101 (LALL…LVVV), 149–169 (AFAK…GFAL), 193–213 (MIAI…AFTI), 227–247 (LMGS…GIIA), 312–332 (IYLT…MTLL), 336–356 (TLLA…GSGF), and 357–377 (IVLA…LAII).

Belongs to the dicarboxylate/amino acid:cation symporter (DAACS) (TC 2.A.23) family.

It is found in the cell membrane. Functionally, responsible for the transport of dicarboxylates such as succinate, fumarate, and malate across the membrane. This chain is C4-dicarboxylate transport protein, found in Polynucleobacter asymbioticus (strain DSM 18221 / CIP 109841 / QLW-P1DMWA-1) (Polynucleobacter necessarius subsp. asymbioticus).